Reading from the N-terminus, the 79-residue chain is Small ribosomal subunit protein bS18 (79 aa).

Belongs to the bacterial ribosomal protein bS18 family. As to quaternary structure, part of the 30S ribosomal subunit. Forms a tight heterodimer with protein bS6.

Binds as a heterodimer with protein bS6 to the central domain of the 16S rRNA, where it helps stabilize the platform of the 30S subunit. The chain is Small ribosomal subunit protein bS18 from Ureaplasma urealyticum serovar 10 (strain ATCC 33699 / Western).